Reading from the N-terminus, the 248-residue chain is MFLAKALLEGADRGLGEALGGLFGGGGQRREGGGRNIGGIVGGIVNFISEAAAAQYTPEPPPTQQHFTSVEASESEEVRRFRQQFTQLAGPDMEVGATDLMNILNKVLSKHKDLKTDGFSLDTCRSIVSVMDSDTTGKLGFEEFKYLWNNIKKWQCVYKQYDRDHSGSLGSSQLRGALQAAGFQLNEQLYQMIVRRYANEDGDMDFNNFISCLVRLDAMFRAFKSLDRDRDGLIQVSIKEWLQLTMYS.

13 residues coordinate Ca(2+): A89, D92, E94, D117, D132, D134, T136, K138, E143, D162, D164, S166, and D205. EF-hand domains are found at residues 119–152 (FSLD…NNIK), 149–184 (NNIK…AGFQ), 185–213 (LNEQ…ISCL), and 214–248 (VRLD…TMYS).

As to quaternary structure, heterodimer of a large (catalytic) and a small (regulatory) subunit.

It localises to the cytoplasm. The protein resides in the cell membrane. In terms of biological role, calcium-regulated non-lysosomal thiol-protease which catalyzes limited proteolysis of substrates involved in cytoskeletal remodeling and signal transduction. This small subunit may act as a tissue-specific chaperone of the large subunit, possibly by helping it fold into its correct conformation for activity. The protein is Calpain small subunit 2 (CAPNS2) of Homo sapiens (Human).